A 205-amino-acid polypeptide reads, in one-letter code: Protein N-terminal glutamine amidohydrolase (205 aa).

Residues cysteine 20, histidine 74, and aspartate 90 contribute to the active site.

The protein belongs to the NTAQ1 family. In terms of assembly, monomer.

The catalysed reaction is N-terminal L-glutaminyl-[protein] + H2O = N-terminal L-glutamyl-[protein] + NH4(+). In terms of biological role, mediates the side-chain deamidation of N-terminal glutamine residues to glutamate, an important step in N-end rule pathway of protein degradation. Conversion of the resulting N-terminal glutamine to glutamate renders the protein susceptible to arginylation, polyubiquitination and degradation as specified by the N-end rule. Does not act on substrates with internal or C-terminal glutamine and does not act on non-glutamine residues in any position. This chain is Protein N-terminal glutamine amidohydrolase (tun), found in Drosophila mojavensis (Fruit fly).